The chain runs to 327 residues: Spermidine/putrescine import ATP-binding protein PotA (327 aa).

The 231-residue stretch at isoleucine 5 to isoleucine 235 folds into the ABC transporter domain. Glycine 37 to threonine 44 is a binding site for ATP.

It belongs to the ABC transporter superfamily. Spermidine/putrescine importer (TC 3.A.1.11.1) family. In terms of assembly, the complex is composed of two ATP-binding proteins (PotA), two transmembrane proteins (PotB and PotC) and a solute-binding protein (PotD).

The protein localises to the cell membrane. The catalysed reaction is ATP + H2O + polyamine-[polyamine-binding protein]Side 1 = ADP + phosphate + polyamineSide 2 + [polyamine-binding protein]Side 1.. Its function is as follows. Part of the ABC transporter complex PotABCD involved in spermidine/putrescine import. Responsible for energy coupling to the transport system. The polypeptide is Spermidine/putrescine import ATP-binding protein PotA (Bacillus anthracis).